Reading from the N-terminus, the 106-residue chain is uncharacterized protein (106 aa).

Residues 1–6 are Cytoplasmic-facing; sequence MYQTSP. The chain crosses the membrane as a helical span at residues 7–27; the sequence is LSLFYFQVLVPKFLECFLCFP. Topologically, residues 28–32 are extracellular; sequence YHKIS. A helical membrane pass occupies residues 33–53; the sequence is LVALLSFFYCQLQTNMIILLS. Over 54-73 the chain is Cytoplasmic; the sequence is QIKRFLYRQIMIALKIKAKK. Residues 74 to 94 traverse the membrane as a helical segment; sequence FWFIFKYFNVSCDARLFNELF. At 95–106 the chain is on the extracellular side; that stretch reads YIFQTYVSVDSK.

The protein resides in the membrane. This is an uncharacterized protein from Saccharomyces cerevisiae (strain ATCC 204508 / S288c) (Baker's yeast).